The following is a 370-amino-acid chain: Arginine kinase (370 aa).

The Phosphagen kinase N-terminal domain occupies Gln6–Asn89. Residues Tyr115–Leu358 enclose the Phosphagen kinase C-terminal domain. Residues Ser118–Arg122 and His181 each bind ATP. A substrate-binding site is contributed by Glu222. Arg226 is a binding site for ATP. Cys274 provides a ligand contact to substrate. ATP-binding positions include Arg283–His287 and Arg311–Glu316. Glu316 contributes to the substrate binding site.

Belongs to the ATP:guanido phosphotransferase family. In terms of assembly, homodimer. Post-translationally, the N-terminus is blocked.

It catalyses the reaction L-arginine + ATP = N(omega)-phospho-L-arginine + ADP + H(+). The protein is Arginine kinase (AK) of Stichopus japonicus (Sea cucumber).